The primary structure comprises 122 residues: Small ribosomal subunit protein uS13 (122 aa).

Residues 95 to 122 (GLPVRGQRTHTNARTRKGPAKSIAGKKK) form a disordered region.

Belongs to the universal ribosomal protein uS13 family. Part of the 30S ribosomal subunit. Forms a loose heterodimer with protein S19. Forms two bridges to the 50S subunit in the 70S ribosome.

Located at the top of the head of the 30S subunit, it contacts several helices of the 16S rRNA. In the 70S ribosome it contacts the 23S rRNA (bridge B1a) and protein L5 of the 50S subunit (bridge B1b), connecting the 2 subunits; these bridges are implicated in subunit movement. Contacts the tRNAs in the A and P-sites. In Nitrobacter hamburgensis (strain DSM 10229 / NCIMB 13809 / X14), this protein is Small ribosomal subunit protein uS13.